The following is a 191-amino-acid chain: Hypoxanthine/guanine phosphoribosyltransferase (191 aa).

The protein belongs to the purine/pyrimidine phosphoribosyltransferase family. Archaeal HPRT subfamily. Homodimer.

The protein localises to the cytoplasm. The catalysed reaction is IMP + diphosphate = hypoxanthine + 5-phospho-alpha-D-ribose 1-diphosphate. The enzyme catalyses GMP + diphosphate = guanine + 5-phospho-alpha-D-ribose 1-diphosphate. The protein operates within purine metabolism; IMP biosynthesis via salvage pathway; IMP from hypoxanthine: step 1/1. Catalyzes a salvage reaction resulting in the formation of IMP that is energically less costly than de novo synthesis. This Methanocella paludicola (strain DSM 17711 / JCM 13418 / NBRC 101707 / SANAE) protein is Hypoxanthine/guanine phosphoribosyltransferase.